The sequence spans 290 residues: MAASVWSGYLTFGLISMPVRLFSGARGSRISFNQLHREDHARVKQQLVCSADGKVLERDEIVKGYEYRKGEYVIIDPEELKKIEPKTAKSMEILEFVKAEEVDPVYFETSYYLQPDEGGEKPYALLVQALKESDYMGIAKVTMHNREYTVFLRPHTSGIMLHTMYYEDEVRKMEAPKITSEVKPAEVKIAHQLIEALAGKFEPEKFHDVYEANVKKLIEAHLEGQDVEAVAKPAKPAKVVDLMDALKQSLAAMKDQKKGSRLAEVDKESTVQMTPKKPAVKERRGRKRVA.

The region spanning 11 to 183 (TFGLISMPVR…EAPKITSEVK (173 aa)) is the Ku domain. The interval 253 to 290 (MKDQKKGSRLAEVDKESTVQMTPKKPAVKERRGRKRVA) is disordered. Basic and acidic residues predominate over residues 254 to 269 (KDQKKGSRLAEVDKES).

It belongs to the prokaryotic Ku family. Homodimer. Interacts with LigD.

In terms of biological role, with LigD forms a non-homologous end joining (NHEJ) DNA repair enzyme, which repairs dsDNA breaks with reduced fidelity. Binds linear dsDNA with 5'- and 3'- overhangs but not closed circular dsDNA nor ssDNA. Recruits and stimulates the ligase activity of LigD. The protein is Non-homologous end joining protein Ku of Koribacter versatilis (strain Ellin345).